The chain runs to 468 residues: 3-isopropylmalate dehydratase large subunit (468 aa).

Residues cysteine 349, cysteine 409, and cysteine 412 each coordinate [4Fe-4S] cluster.

It belongs to the aconitase/IPM isomerase family. LeuC type 1 subfamily. As to quaternary structure, heterodimer of LeuC and LeuD. It depends on [4Fe-4S] cluster as a cofactor.

The enzyme catalyses (2R,3S)-3-isopropylmalate = (2S)-2-isopropylmalate. It functions in the pathway amino-acid biosynthesis; L-leucine biosynthesis; L-leucine from 3-methyl-2-oxobutanoate: step 2/4. Its function is as follows. Catalyzes the isomerization between 2-isopropylmalate and 3-isopropylmalate, via the formation of 2-isopropylmaleate. The polypeptide is 3-isopropylmalate dehydratase large subunit (Ruegeria pomeroyi (strain ATCC 700808 / DSM 15171 / DSS-3) (Silicibacter pomeroyi)).